The sequence spans 207 residues: MGRERSGIVLVLCAPSGTGKTTLTRRLLTEFPRFAFSVSYTTRKPRNGEVDGKDYHFVTVEAFLRLRDAGFFAEWAEVHGNFYGTPLKATLDLLDEGRDVLFDIDVQGARQLRASLQRGRYVFIMPPSRDELEHRLRARGTDDEETIARRLANAAKELREARRFDAWIVNDDLERAYDELRAAYIEETLSPECRSAFLDGLLQGWND.

One can recognise a Guanylate kinase-like domain in the interval 7-185 (GIVLVLCAPS…AYDELRAAYI (179 aa)). 14–21 (APSGTGKT) serves as a coordination point for ATP.

This sequence belongs to the guanylate kinase family.

Its subcellular location is the cytoplasm. The catalysed reaction is GMP + ATP = GDP + ADP. Its function is as follows. Essential for recycling GMP and indirectly, cGMP. The chain is Guanylate kinase from Nitratidesulfovibrio vulgaris (strain ATCC 29579 / DSM 644 / CCUG 34227 / NCIMB 8303 / VKM B-1760 / Hildenborough) (Desulfovibrio vulgaris).